The chain runs to 85 residues: Small ribosomal subunit protein uS17 (85 aa).

It belongs to the universal ribosomal protein uS17 family. As to quaternary structure, part of the 30S ribosomal subunit.

Its function is as follows. One of the primary rRNA binding proteins, it binds specifically to the 5'-end of 16S ribosomal RNA. In Geobacter sulfurreducens (strain ATCC 51573 / DSM 12127 / PCA), this protein is Small ribosomal subunit protein uS17.